Here is a 38-residue protein sequence, read N- to C-terminus: Exendin-1 (38 aa).

Residue serine 32 is glycosylated (O-linked (HexNAc...) serine; in Exendin-1 and Exendin-1b).

The protein belongs to the glucagon family. Post-translationally, O-linked glycan consists of Hex-HexNAc saccharide. In terms of processing, glycosylation may be of interest for the biological stability of exendin-1 and exendin-1b. As to expression, expressed by the venom gland.

Its subcellular location is the secreted. Its function is as follows. O-linked and free exendin-1 and exendin-1b have vasoactive intestinal peptide(VIP)/secretin-like biological activities. They interact with rat and human VIP receptors 1 (VIPR1) and 2 (VIPR2), with the highest affinity for the human VIPR2. They induce hypotension that is mediated by relaxation of cardiac smooth muscle. This is Exendin-1 from Heloderma horridum horridum (Mexican beaded lizard).